A 180-amino-acid polypeptide reads, in one-letter code: Mitochondrial membrane protein FMP33 (180 aa).

The next 3 membrane-spanning stretches (helical) occupy residues 34 to 54 (LYTSLLVTTLYGTGLACLYLE), 121 to 141 (FSIVWGFLIQLSSLIGNSTLG), and 145 to 165 (ILYKGSVVSVLGFPPLIYMAL).

It is found in the mitochondrion membrane. The chain is Mitochondrial membrane protein FMP33 (FMP33) from Saccharomyces cerevisiae (strain ATCC 204508 / S288c) (Baker's yeast).